Consider the following 316-residue polypeptide: uncharacterized protein (316 aa).

4 consecutive transmembrane segments (helical) span residues 74–94 (IPVLGLLTVLPLGLFIFGMAI), 99–119 (WPYAALLVFLLFLFTLLIFLG), 166–186 (MAGCAVPFFAGVGTLLGTVLG), and 188–208 (VEGFVGAVPGAAIGAMAGYIF).

The protein localises to the cell membrane. This is an uncharacterized protein from Synechocystis sp. (strain ATCC 27184 / PCC 6803 / Kazusa).